Reading from the N-terminus, the 193-residue chain is Cryptic protein (193 aa).

The first 25 residues, 1-25 (MFWRKHVRILFTVTLIWQAIHLGKG), serve as a signal peptide directing secretion. N-linked (GlcNAc...) asparagine glycosylation is found at N38 and N60. Intrachain disulfides connect C91–C103 and C105–C114. The 25-residue stretch at 91–115 (CQNGGTCILGAFCACPKHFSGRHCE) folds into the EGF-like domain.

Belongs to the EGF-CFC (Cripto-1/FRL1/Cryptic) family.

The protein localises to the cell membrane. It localises to the secreted. Its function is as follows. May play a role in mesoderm and/or neural patterning during gastrulation. The protein is Cryptic protein (CFC1) of Gallus gallus (Chicken).